The primary structure comprises 134 residues: Replication enhancer protein (134 aa).

The protein belongs to the geminiviridae replication enhancer protein family. In terms of assembly, homooligomer. Interacts with the replication-associated protein (REP). Interacts with host proliferating cell nuclear antigen (PCNA). Interacts with host retinoblastoma-related protein 1 (RBR1), and may thereby deregulate the host cell cycle. Oligomerization and interaction with PCNA are necessary for optimal replication enhancement.

In terms of biological role, increases viral DNA accumulation. Enhances infectivity and symptom expression. The sequence is that of Replication enhancer protein from Cynanchum acutum (Little mallow).